Reading from the N-terminus, the 71-residue chain is Large ribosomal subunit protein bL31 (71 aa).

4 residues coordinate Zn(2+): Cys-16, Cys-18, Cys-36, and Cys-39.

It belongs to the bacterial ribosomal protein bL31 family. Type A subfamily. In terms of assembly, part of the 50S ribosomal subunit. Zn(2+) is required as a cofactor.

Its function is as follows. Binds the 23S rRNA. The chain is Large ribosomal subunit protein bL31 from Thermus thermophilus (strain ATCC BAA-163 / DSM 7039 / HB27).